We begin with the raw amino-acid sequence, 120 residues long: Glycine cleavage system H protein (120 aa).

The Lipoyl-binding domain maps to Val17–Lys99. Lys58 carries the N6-lipoyllysine modification.

Belongs to the GcvH family. As to quaternary structure, the glycine cleavage system is composed of four proteins: P, T, L and H. It depends on (R)-lipoate as a cofactor.

In terms of biological role, the glycine cleavage system catalyzes the degradation of glycine. The H protein shuttles the methylamine group of glycine from the P protein to the T protein. This is Glycine cleavage system H protein from Rhizobium leguminosarum bv. trifolii (strain WSM2304).